A 317-amino-acid chain; its full sequence is Ornithine carbamoyltransferase (317 aa).

Residues 57–60 (STRT), Q84, R108, and 135–138 (HPCQ) each bind carbamoyl phosphate. L-ornithine is bound by residues N166, D230, and 234–235 (SM). Residues 270–271 (CL) and R298 each bind carbamoyl phosphate.

This sequence belongs to the aspartate/ornithine carbamoyltransferase superfamily. OTCase family. As to quaternary structure, homododecamer.

The protein resides in the cytoplasm. The enzyme catalyses carbamoyl phosphate + L-ornithine = L-citrulline + phosphate + H(+). It participates in amino-acid biosynthesis; L-arginine biosynthesis; L-arginine from L-ornithine and carbamoyl phosphate: step 1/3. In terms of biological role, reversibly catalyzes the transfer of the carbamoyl group from carbamoyl phosphate (CP) to the N(epsilon) atom of ornithine (ORN) to produce L-citrulline. The polypeptide is Ornithine carbamoyltransferase (Pyrococcus abyssi (strain GE5 / Orsay)).